Here is a 399-residue protein sequence, read N- to C-terminus: Elongation factor Tu (399 aa).

A tr-type G domain is found at 10-209 (NPHVNIGTIG…EVDSYIPTPE (200 aa)). Positions 19–26 (GHVYHGKT) are G1. 19–26 (GHVYHGKT) contributes to the GTP binding site. Residue Thr26 coordinates Mg(2+). Positions 60 to 64 (GITIA) are G2. A G3 region spans residues 81-84 (DCPG). GTP-binding positions include 81-85 (DCPGH) and 136-139 (NKQD). The segment at 136–139 (NKQD) is G4. Residues 174–176 (SAL) are G5.

Belongs to the TRAFAC class translation factor GTPase superfamily. Classic translation factor GTPase family. EF-Tu/EF-1A subfamily. Monomer.

The protein resides in the cytoplasm. It catalyses the reaction GTP + H2O = GDP + phosphate + H(+). In terms of biological role, GTP hydrolase that promotes the GTP-dependent binding of aminoacyl-tRNA to the A-site of ribosomes during protein biosynthesis. In Helicobacter pylori (strain J99 / ATCC 700824) (Campylobacter pylori J99), this protein is Elongation factor Tu.